Reading from the N-terminus, the 506-residue chain is ATP synthase subunit alpha, plastid (506 aa).

170–177 (GDRQTGKT) is an ATP binding site.

The protein belongs to the ATPase alpha/beta chains family. F-type ATPases have 2 components, CF(1) - the catalytic core - and CF(0) - the membrane proton channel. CF(1) has five subunits: alpha(3), beta(3), gamma(1), delta(1), epsilon(1). CF(0) has four main subunits: a, b, b' and c.

Its subcellular location is the plastid membrane. The catalysed reaction is ATP + H2O + 4 H(+)(in) = ADP + phosphate + 5 H(+)(out). Its function is as follows. Produces ATP from ADP in the presence of a proton gradient across the membrane. The alpha chain is a regulatory subunit. The chain is ATP synthase subunit alpha, plastid from Prototheca wickerhamii.